The chain runs to 963 residues: Integrator complex subunit 4 (963 aa).

Lys-26 is modified (N6-acetyllysine). HEAT repeat units lie at residues 66–105 (AESV…TAGF), 145–183 (QAIQ…LEKS), 190–228 (GLAA…RGLK), 229–263 (LHQT…SQLY), 277–313 (IRLV…EQVS), 369–405 (NLIE…AQSS), 406–444 (PSFA…NITL), and 446–484 (EDQL…GIHL). Residue Lys-791 forms a Glycyl lysine isopeptide (Lys-Gly) (interchain with G-Cter in SUMO1); alternate linkage. Lys-791 is covalently cross-linked (Glycyl lysine isopeptide (Lys-Gly) (interchain with G-Cter in SUMO2); alternate).

The protein belongs to the Integrator subunit 4 family. Component of the Integrator complex, composed of core subunits INTS1, INTS2, INTS3, INTS4, INTS5, INTS6, INTS7, INTS8, INTS9/RC74, INTS10, INTS11/CPSF3L, INTS12, INTS13, INTS14 and INTS15. The core complex associates with protein phosphatase 2A subunits PPP2CA and PPP2R1A, to form the Integrator-PP2A (INTAC) complex. INTS4 is part of the RNA endonuclease subcomplex, composed of INTS4, INTS9, INTS11 and inositol hexakisphosphate (InsP6). Interacts with BRAT1; interaction is required for the assembly of the RNA endonuclease subcomplex.

The protein localises to the nucleus. It is found in the cytoplasm. Component of the integrator complex, a multiprotein complex that terminates RNA polymerase II (Pol II) transcription in the promoter-proximal region of genes. The integrator complex provides a quality checkpoint during transcription elongation by driving premature transcription termination of transcripts that are unfavorably configured for transcriptional elongation: the complex terminates transcription by (1) catalyzing dephosphorylation of the C-terminal domain (CTD) of Pol II subunit POLR2A/RPB1 and SUPT5H/SPT5, (2) degrading the exiting nascent RNA transcript via endonuclease activity and (3) promoting the release of Pol II from bound DNA. The integrator complex is also involved in terminating the synthesis of non-coding Pol II transcripts, such as enhancer RNAs (eRNAs), small nuclear RNAs (snRNAs), telomerase RNAs and long non-coding RNAs (lncRNAs). Within the integrator complex, INTS4 acts as an scaffold that links INTS9 and INTS11. Mediates recruitment of cytoplasmic dynein to the nuclear envelope, probably as component of the integrator complex. In Homo sapiens (Human), this protein is Integrator complex subunit 4.